A 114-amino-acid chain; its full sequence is As-peptide 126 (114 aa).

The signal sequence occupies residues 1–22; sequence MSRALICSLALLAMLVISGTYA. 9 consecutive repeat copies span residues 22 to 29, 30 to 37, 38 to 45, 46 to 53, 54 to 61, 62 to 69, 70 to 77, 78 to 85, and 86 to 93. The 9 X 8 AA approximate tandem repeats of [AP]-[ILS]-[AP]-A-A-N-A-[DE] stretch occupies residues 22–93; it reads ASPAANAEAL…AEPLAAANAE (72 aa). The propeptide occupies 23–104; sequence SPAANAEALA…SAGPSPLAAA (82 aa). Over residues 82–96 the composition is skewed to low complexity; it reads ANAEPLAAANAEPSA. Positions 82–114 are disordered; the sequence is ANAEPLAAANAEPSAGPSPLAAAQDPPVVKMKG. At Gln-105 the chain carries Pyrrolidone carboxylic acid. Residue Lys-113 is modified to Lysine amide.

Expressed by the venom gland.

Its subcellular location is the secreted. The chain is As-peptide 126 from Anoplius samariensis (Solitary wasp).